Here is a 429-residue protein sequence, read N- to C-terminus: Palmitoyltransferase ZDHHC23 (429 aa).

Residues 1–81 (MKPVKKKKTE…RIPWLRGAKK (81 aa)) lie on the Cytoplasmic side of the membrane. A helical membrane pass occupies residues 82–102 (VNISILPPLVLLPVLLRVASW). H103 is a topological domain (lumenal). The chain crosses the membrane as a helical span at residues 104–124 (FLLGVVVLTSLPMLALWYYYL). The Cytoplasmic segment spans residues 125–130 (THRRKE). The chain crosses the membrane as a helical span at residues 131–151 (QTLFFLSLGLFSLGYMYYVFL). Residues 152–159 (QEVVPQGH) are Lumenal-facing. Residues 160–180 (VGPAQLALLTCGLFLILVALY) form a helical membrane-spanning segment. Topologically, residues 181 to 296 (RAKKNPGYLS…NSCVGESNHQ (116 aa)) are cytoplasmic. A disordered region spans residues 212 to 247 (QEKTKGFPGTDTSGSLNNRTLKDDAKGSSRVGLDSP). Residues 221–230 (TDTSGSLNNR) show a composition bias toward polar residues. A DHHC domain is found at 253 to 303 (DWCAKCQLVRPARAWHCRICGICVRRMDHHCVWINSCVGESNHQAFILALS). C283 functions as the S-palmitoyl cysteine intermediate in the catalytic mechanism. The chain crosses the membrane as a helical span at residues 297-317 (AFILALSIFLLTSVYGISLTL). Over 318-347 (NTICRDRSLFTALFYCPGVYANYSSALSFT) the chain is Lumenal. The helical transmembrane segment at 348 to 368 (CVWYSVIITAGMAYIFLIQLI) threads the bilayer. At 369–429 (NISYNVTERE…TVHTPAEDIV (61 aa)) the chain is on the cytoplasmic side. Positions 426-429 (EDIV) are interaction with NOS1.

It belongs to the DHHC palmitoyltransferase family. In terms of assembly, interacts with NOS1. As to expression, expressed in the brain (at protein level), with highest levels in olfactory bulb, piriform cortex and hippocampus.

It is found in the golgi apparatus membrane. The protein localises to the golgi apparatus. The protein resides in the trans-Golgi network membrane. The catalysed reaction is L-cysteinyl-[protein] + hexadecanoyl-CoA = S-hexadecanoyl-L-cysteinyl-[protein] + CoA. Functionally, palmitoyltransferase that could catalyze the addition of palmitate onto various protein substrates and be involved in a variety of cellular processes. Palmitoyltransferase that mediates palmitoylation of KCNMA1, regulating localization of KCNMA1 to the plasma membrane. May be involved in NOS1 regulation and targeting to the synaptic membrane. The chain is Palmitoyltransferase ZDHHC23 from Rattus norvegicus (Rat).